Consider the following 444-residue polypeptide: Adenylosuccinate synthetase (444 aa).

Residues 12 to 18 and 40 to 42 each bind GTP; these read GDEGKGK and GHT. Asp13 acts as the Proton acceptor in catalysis. Mg(2+) contacts are provided by Asp13 and Gly40. IMP is bound by residues 13 to 16, 38 to 41, Thr128, Arg142, Gln223, Thr238, and Arg302; these read DEGK and NAGH. Residue His41 is the Proton donor of the active site. Position 298–304 (298–304) interacts with substrate; sequence TTTGRRR. GTP contacts are provided by residues Arg304, 330–332, and 412–414; these read KLD and SLG.

This sequence belongs to the adenylosuccinate synthetase family. Homodimer. The cofactor is Mg(2+).

The protein localises to the cytoplasm. It catalyses the reaction IMP + L-aspartate + GTP = N(6)-(1,2-dicarboxyethyl)-AMP + GDP + phosphate + 2 H(+). The protein operates within purine metabolism; AMP biosynthesis via de novo pathway; AMP from IMP: step 1/2. Functionally, plays an important role in the de novo pathway of purine nucleotide biosynthesis. Catalyzes the first committed step in the biosynthesis of AMP from IMP. In Synechococcus sp. (strain ATCC 27144 / PCC 6301 / SAUG 1402/1) (Anacystis nidulans), this protein is Adenylosuccinate synthetase.